The following is a 129-amino-acid chain: MSNVPAELKYSKEHEWLRKEADGTYTVGITEHAQELLGDMVFVDLPEVGATVSAGDDCAVAESVKAASDIYAPVSGEIVAVNDVLSDSPELVNSEPYAGGWIFKIKASDESELESLLDATAYEALLEDE.

The 83-residue stretch at 24–106 (TYTVGITEHA…YAGGWIFKIK (83 aa)) folds into the Lipoyl-binding domain. An N6-lipoyllysine modification is found at K65.

The protein belongs to the GcvH family. The glycine cleavage system is composed of four proteins: P, T, L and H. It depends on (R)-lipoate as a cofactor.

Its function is as follows. The glycine cleavage system catalyzes the degradation of glycine. The H protein shuttles the methylamine group of glycine from the P protein to the T protein. This chain is Glycine cleavage system H protein, found in Shigella dysenteriae serotype 1 (strain Sd197).